A 181-amino-acid polypeptide reads, in one-letter code: U1 small nuclear ribonucleoprotein C (181 aa).

Residues 2–34 (PKCDYCDVYLTHDSMSVRKAHNSGRNHLRNVVD) form a Matrin-type zinc finger. 2 stretches are compositionally biased toward pro residues: residues 129 to 143 (PGMP…PGGL) and 150 to 174 (PIPP…PPPG). Positions 129–181 (PGMPAGMPFPPPGGLPPNFQFPIPPPGGFPGMPPPGQGFPGMPPPGGNHDERR) are disordered.

Belongs to the U1 small nuclear ribonucleoprotein C family. In terms of assembly, U1 snRNP is composed of the 7 core Sm proteins B/B', D1, D2, D3, E, F and G that assemble in a heptameric protein ring on the Sm site of the small nuclear RNA to form the core snRNP, and at least 3 U1 snRNP-specific proteins U1-70K, U1-A and U1-C. U1-C interacts with U1 snRNA and the 5' splice-site region of the pre-mRNA.

Its subcellular location is the nucleus. Functionally, component of the spliceosomal U1 snRNP, which is essential for recognition of the pre-mRNA 5' splice-site and the subsequent assembly of the spliceosome. U1-C is directly involved in initial 5' splice-site recognition for both constitutive and regulated alternative splicing. The interaction with the 5' splice-site seems to precede base-pairing between the pre-mRNA and the U1 snRNA. Stimulates commitment or early (E) complex formation by stabilizing the base pairing of the 5' end of the U1 snRNA and the 5' splice-site region. The sequence is that of U1 small nuclear ribonucleoprotein C from Sclerotinia sclerotiorum (strain ATCC 18683 / 1980 / Ss-1) (White mold).